Reading from the N-terminus, the 264-residue chain is MNTQPADFSAAQAATSLTQFRSAAPLVHCLTNDVVQSFTANVLLALNASPAMVVDPEEAAQFSAVADALLINVGTLERTRAEAMRAAVNSAHQAGTPWVLDPVAVGGLTFRTEFCRELLTWKPAAIRGNASEIMALAGLAAQGRGVDSADDSLAALPAARELARQVGTIVVVTGAVDYVTDGERDIAVTGGDSMMTRVVGTGCALSAVVAGFCSLEGDRLSHVTAACYVMALAGQQATSVSQGTGSFIPHFLDRLYTLRAEDLA.

Methionine 52 is a binding site for substrate. The ATP site is built by arginine 127 and threonine 173. Residue glycine 200 participates in substrate binding.

Belongs to the Thz kinase family. Requires Mg(2+) as cofactor.

The enzyme catalyses 5-(2-hydroxyethyl)-4-methylthiazole + ATP = 4-methyl-5-(2-phosphooxyethyl)-thiazole + ADP + H(+). It functions in the pathway cofactor biosynthesis; thiamine diphosphate biosynthesis; 4-methyl-5-(2-phosphoethyl)-thiazole from 5-(2-hydroxyethyl)-4-methylthiazole: step 1/1. Its function is as follows. Catalyzes the phosphorylation of the hydroxyl group of 4-methyl-5-beta-hydroxyethylthiazole (THZ). In Pectobacterium atrosepticum (strain SCRI 1043 / ATCC BAA-672) (Erwinia carotovora subsp. atroseptica), this protein is Hydroxyethylthiazole kinase.